The primary structure comprises 692 residues: Protein adenylyltransferase SelO-1, mitochondrial (692 aa).

A mitochondrion-targeting transit peptide spans 1 to 24 (MASVGSRLTRFYISRPGVIARRFL). ATP-binding residues include glycine 142, glycine 144, lysine 176, aspartate 188, glycine 189, arginine 246, and arginine 253. Residue aspartate 337 is the Proton acceptor of the active site. Residues asparagine 338 and aspartate 347 each contribute to the Mg(2+) site. Aspartate 347 contributes to the ATP binding site. Positions 637-676 (LEQPGWMGRGGAAIPGERDETEEEGSNSSGAGARGLVPYD) are disordered. Selenocysteine 690 is a non-standard amino acid (selenocysteine).

Belongs to the SELO family. It depends on Mg(2+) as a cofactor.

It is found in the mitochondrion. It carries out the reaction L-tyrosyl-[protein] + ATP = O-(5'-adenylyl)-L-tyrosyl-[protein] + diphosphate. It catalyses the reaction L-threonyl-[protein] + ATP = 3-O-(5'-adenylyl)-L-threonyl-[protein] + diphosphate. The enzyme catalyses L-seryl-[protein] + ATP = 3-O-(5'-adenylyl)-L-seryl-[protein] + diphosphate. Catalyzes the transfer of adenosine 5'-monophosphate (AMP) to Ser, Thr and Tyr residues of target proteins (AMPylation). May be a redox-active mitochondrial selenoprotein which interacts with a redox target protein. The chain is Protein adenylyltransferase SelO-1, mitochondrial from Danio rerio (Zebrafish).